Consider the following 271-residue polypeptide: Small ribosomal subunit protein uS3 (271 aa).

In terms of domain architecture, KH type-2 spans 40-108 (IRKFLKKRLY…TIIVNIVEVR (69 aa)). The segment at 210-271 (PTRDGVNPRE…RPQRTENKGN (62 aa)) is disordered. Positions 215–247 (VNPREESRKSDRRDNKRDNRRNDRRGNDRRGND) are enriched in basic and acidic residues.

This sequence belongs to the universal ribosomal protein uS3 family. Part of the 30S ribosomal subunit. Forms a tight complex with proteins S10 and S14.

Binds the lower part of the 30S subunit head. Binds mRNA in the 70S ribosome, positioning it for translation. The chain is Small ribosomal subunit protein uS3 from Clostridioides difficile (strain 630) (Peptoclostridium difficile).